A 496-amino-acid polypeptide reads, in one-letter code: Acyltransferase clz6 (496 aa).

His163 functions as the Proton acceptor in the catalytic mechanism.

It belongs to the plant acyltransferase family. In terms of assembly, monomer.

It functions in the pathway secondary metabolite biosynthesis. Acyltransferase; part of the gene cluster that mediates the biosynthesis of squalestatin S1 (SQS1, also known as zaragozic acid A), a heavily oxidized fungal polyketide that offers potent cholesterol lowering activity by targeting squalene synthase (SS). SQS1 is composed of a 2,8-dioxobicyclic[3.2.1]octane-3,4,5-tricarboxyclic acid core that is connected to two lipophilic polyketide arms. These initial steps feature the priming of an unusual benzoic acid starter unit onto the highly reducing polyketide synthase clz14, followed by oxaloacetate extension and product release to generate a tricarboxylic acid containing product. The phenylalanine ammonia lyase (PAL) clz10 and the acyl-CoA ligase clz12 are involved in transforming phenylalanine into benzoyl-CoA. The citrate synthase-like protein clz17 is involved in connecting the C-alpha-carbons of the hexaketide chain and oxaloacetate to afford the tricarboxylic acid unit. The potential hydrolytic enzymes, clz11 and clz13, are in close proximity to pks2 and may participate in product release. On the other side, the tetraketide arm is synthesized by a the squalestatin tetraketide synthase clz2 and enzymatically esterified to the core in the last biosynthetic step, by the acetyltransferase clz6. The biosynthesis of the tetraketide must involve 3 rounds of chain extension. After the first and second rounds methyl-transfer occurs, and in all rounds of extension the ketoreductase and dehydratase are active. The enoyl reductase and C-MeT of clz2 are not active in the final round of extension. The acetyltransferase clz6 appears to have a broad substrate selectivity for its acyl CoA substrate, allowing the in vitro synthesis of novel squalestatins. The biosynthesis of SQS1 requires several oxidative steps likely performed by oxidoreductases clz3, clz15 and clz16. Finally, in support of the identification of the cluster as being responsible for SQS1 production, the cluster contains a gene encoding a putative squalene synthase (SS) clz20, suggesting a likely mechanism for self-resistance. This is Acyltransferase clz6 from Cochliobolus lunatus (Filamentous fungus).